A 559-amino-acid chain; its full sequence is Small ribosomal subunit protein bS1 (559 aa).

6 consecutive S1 motif domains span residues 21–87 (GAII…LSRE), 105–171 (DEVV…VSRR), 192–260 (GQQV…LGLK), 277–347 (GTRV…LGIK), 364–434 (GDRI…LGIK), and 451–520 (GSIV…LSVK).

This sequence belongs to the bacterial ribosomal protein bS1 family.

Its function is as follows. Binds mRNA; thus facilitating recognition of the initiation point. It is needed to translate mRNA with a short Shine-Dalgarno (SD) purine-rich sequence. The chain is Small ribosomal subunit protein bS1 (rpsA) from Pseudomonas aeruginosa (strain ATCC 15692 / DSM 22644 / CIP 104116 / JCM 14847 / LMG 12228 / 1C / PRS 101 / PAO1).